A 433-amino-acid polypeptide reads, in one-letter code: 3-phosphoshikimate 1-carboxyvinyltransferase (433 aa).

3-phosphoshikimate contacts are provided by Lys15, Ser16, and Arg20. Position 15 (Lys15) interacts with phosphoenolpyruvate. Positions 96 and 124 each coordinate phosphoenolpyruvate. Residues Ser169, Gln171, Asp318, and Lys345 each contribute to the 3-phosphoshikimate site. Gln171 contacts phosphoenolpyruvate. Asp318 (proton acceptor) is an active-site residue. Residues Arg349 and Arg393 each coordinate phosphoenolpyruvate.

Belongs to the EPSP synthase family. As to quaternary structure, monomer.

The protein localises to the cytoplasm. It catalyses the reaction 3-phosphoshikimate + phosphoenolpyruvate = 5-O-(1-carboxyvinyl)-3-phosphoshikimate + phosphate. It functions in the pathway metabolic intermediate biosynthesis; chorismate biosynthesis; chorismate from D-erythrose 4-phosphate and phosphoenolpyruvate: step 6/7. Functionally, catalyzes the transfer of the enolpyruvyl moiety of phosphoenolpyruvate (PEP) to the 5-hydroxyl of shikimate-3-phosphate (S3P) to produce enolpyruvyl shikimate-3-phosphate and inorganic phosphate. The protein is 3-phosphoshikimate 1-carboxyvinyltransferase of Chlorobium phaeovibrioides (strain DSM 265 / 1930) (Prosthecochloris vibrioformis (strain DSM 265)).